A 143-amino-acid polypeptide reads, in one-letter code: Deoxyuridine 5'-triphosphate nucleotidohydrolase (143 aa).

Substrate-binding positions include 63–65, Asn-76, 80–82, and Lys-90; these read RSG and TID.

The protein belongs to the dUTPase family. Requires Mg(2+) as cofactor.

The catalysed reaction is dUTP + H2O = dUMP + diphosphate + H(+). It functions in the pathway pyrimidine metabolism; dUMP biosynthesis; dUMP from dCTP (dUTP route): step 2/2. Its function is as follows. This enzyme is involved in nucleotide metabolism: it produces dUMP, the immediate precursor of thymidine nucleotides and it decreases the intracellular concentration of dUTP so that uracil cannot be incorporated into DNA. The polypeptide is Deoxyuridine 5'-triphosphate nucleotidohydrolase (Clostridioides difficile (Peptoclostridium difficile)).